The primary structure comprises 439 residues: Enolase 1 (439 aa).

Residues histidine 160 and glutamate 169 each coordinate substrate. Glutamate 212 functions as the Proton donor in the catalytic mechanism. The Mg(2+) site is built by aspartate 247, glutamate 296, and aspartate 323. Residues glutamate 296 and aspartate 323 each coordinate substrate. The active-site Proton acceptor is the lysine 348. Substrate contacts are provided by residues 375–378 and lysine 399; that span reads SHRS.

It belongs to the enolase family. In terms of assembly, homodimer. Mg(2+) is required as a cofactor.

It is found in the cytoplasm. It catalyses the reaction (2R)-2-phosphoglycerate = phosphoenolpyruvate + H2O. The protein operates within carbohydrate degradation; glycolysis; pyruvate from D-glyceraldehyde 3-phosphate: step 4/5. This Debaryomyces hansenii (strain ATCC 36239 / CBS 767 / BCRC 21394 / JCM 1990 / NBRC 0083 / IGC 2968) (Yeast) protein is Enolase 1 (ENO1).